A 480-amino-acid polypeptide reads, in one-letter code: Major capsid protein (480 aa).

Its subcellular location is the virion. Its function is as follows. Major protein of the capsid. This Trichoplusia ni ascovirus 2c (TnAV-2c) protein is Major capsid protein (MCP-1).